We begin with the raw amino-acid sequence, 127 residues long: DNA-directed RNA polymerase subunit omega (127 aa).

Belongs to the RNA polymerase subunit omega family. In terms of assembly, the RNAP catalytic core consists of 2 alpha, 1 beta, 1 beta' and 1 omega subunit. When a sigma factor is associated with the core the holoenzyme is formed, which can initiate transcription.

The enzyme catalyses RNA(n) + a ribonucleoside 5'-triphosphate = RNA(n+1) + diphosphate. Promotes RNA polymerase assembly. Latches the N- and C-terminal regions of the beta' subunit thereby facilitating its interaction with the beta and alpha subunits. The polypeptide is DNA-directed RNA polymerase subunit omega (Rickettsia rickettsii (strain Iowa)).